The following is a 203-amino-acid chain: ADP-ribosylation factor-like protein 6-interacting protein 1 (203 aa).

Residues 1–41 (MAEGDNRSSNLLAVETASLEEQLQGWGEVMLMADKVLRWER) lie on the Cytoplasmic side of the membrane. The helical transmembrane segment at 42-62 (AWFPPAIMGVVSLLFLIIYYL) threads the bilayer. Over 63–65 (DPS) the chain is Lumenal. A helical membrane pass occupies residues 66–86 (VLSGVSCFVMFLCLADYLVPI). Over 87-133 (LAPRIFGSNKWTTEQQQRFHEICSNLVKTRRRAVGWWKRLFSLKEEK) the chain is Cytoplasmic. The chain crosses the membrane as a helical span at residues 134 to 175 (PKMYFMTMIISLAAVAWVGQQVHNLLLTYLIVTFVLLLPGLN). The Lumenal portion of the chain corresponds to 176-203 (QHGIILKYIGMAKREINKLLKQKEKKNE).

Belongs to the ARL6ip family. Homooligomer. Heterodimer with ARL6IP5. Interacts with ARL6. Interacts with TMEM33. Interacts with ATL1. As to expression, expressed in the cerebral cortex, cerebellum, hippocampus, olfactory bulbs, medulla oblongate and limbic system (at protein level). Ubiquitous. Expressed in all hematopoietic cell lineages, with highest levels in early myeloid progenitor cells.

Its subcellular location is the endomembrane system. It localises to the endoplasmic reticulum membrane. The protein resides in the endoplasmic reticulum. In terms of biological role, positively regulates SLC1A1/EAAC1-mediated glutamate transport by increasing its affinity for glutamate in a PKC activity-dependent manner. Promotes the catalytic efficiency of SLC1A1/EAAC1 probably by reducing its interaction with ARL6IP5, a negative regulator of SLC1A1/EAAC1-mediated glutamate transport. Plays a role in the formation and stabilization of endoplasmic reticulum tubules. Negatively regulates apoptosis, possibly by modulating the activity of caspase-9 (CASP9). Inhibits cleavage of CASP9-dependent substrates and downstream markers of apoptosis but not CASP9 itself. May be involved in protein transport, membrane trafficking, or cell signaling during hematopoietic maturation. This is ADP-ribosylation factor-like protein 6-interacting protein 1 (Arl6ip1) from Mus musculus (Mouse).